The chain runs to 556 residues: Interleukin-1 receptor-like 1 (556 aa).

The first 18 residues, 1–18 (MGFWILAILTILMYSTAA), serve as a signal peptide directing secretion. 2 consecutive Ig-like C2-type domains span residues 19–103 (KFSK…ANVT) and 114–197 (PDYL…VTAT). Over 19–328 (KFSKQSWGLE…SRKNPIDHHS (310 aa)) the chain is Extracellular. Cys36 and Cys87 are disulfide-bonded. N-linked (GlcNAc...) asparagine glycosylation is found at Asn54, Asn95, Asn101, Asn140, and Asn191. Intrachain disulfides connect Cys111/Cys151 and Cys133/Cys181. The interval 198–211 (RSFTVKDEQGFSLF) is flexible linker. In terms of domain architecture, Ig-like C2-type 3 spans 212 to 319 (PVIGAPAQNE…GLRRHTVRLS (108 aa)). N-linked (GlcNAc...) asparagine glycosylation is found at Asn232, Asn254, and Asn273. 2 disulfide bridges follow: Cys235–Cys303 and Cys238–Cys282. Lys321 is covalently cross-linked (Glycyl lysine isopeptide (Lys-Gly) (interchain with G-Cter in ubiquitin)). The helical transmembrane segment at 329 to 349 (IYCIIAVCSVFLMLINVLVII) threads the bilayer. The Cytoplasmic segment spans residues 350–556 (LKMFWIEATL…SLTPLAAQKQ (207 aa)). The TIR domain maps to 375–535 (KLYDAYVVYP…KFWKHVRYQM (161 aa)). The active site involves Glu461.

The protein belongs to the interleukin-1 receptor family. Interacts with MYD88, IRAK1, IRAK4, and TRAF6. Bound to its ligand IL-33, interacts with IL1RAP to form the minimal interleukin-33 signaling complex with a 1:1:1 stoichiometry. Interacts with KIT (bound to KITLG/SCF). A mast cell-specific KITLG/SCF-induced interleukin-33 signaling complex contains IL1RL1, IL1RAP, KIT and MYD88. Interacts with TMED1. Post-translationally, ubiquitinated at Lys-321 in a FBXL19-mediated manner; leading to proteasomal degradation. Ubiquitination by TRAF6 via 'Lys-27'-linked polyubiquitination and deubiquitination by USP38 serves as a critical regulatory mechanism for fine-tuning IL1RL1-mediated inflammatory response. As to expression, highly expressed in kidney, lung, placenta, stomach, skeletal muscle, colon and small intestine. Isoform A is prevalently expressed in the lung, testis, placenta, stomach and colon. Isoform B is more abundant in the brain, kidney and the liver. Isoform C is not detected in brain, heart, liver, kidney and skeletal muscle. Expressed on T-cells in fibrotic liver; at protein level. Overexpressed in fibrotic and cirrhotic liver.

The protein localises to the cell membrane. Its subcellular location is the secreted. The catalysed reaction is NAD(+) + H2O = ADP-D-ribose + nicotinamide + H(+). Its function is as follows. Receptor for interleukin-33 (IL-33) which plays crucial roles in innate and adaptive immunity, contributing to tissue homeostasis and responses to environmental stresses together with coreceptor IL1RAP. Its stimulation recruits MYD88, IRAK1, IRAK4, and TRAF6, followed by phosphorylation of MAPK3/ERK1 and/or MAPK1/ERK2, MAPK14, and MAPK8. Possibly involved in helper T-cell function. Upon tissue injury, induces UCP2-dependent mitochondrial rewiring that attenuates the generation of reactive oxygen species and preserves the integrity of Krebs cycle required for persistent production of itaconate and subsequent GATA3-dependent differentiation of inflammation-resolving alternatively activated macrophages. Functionally, inhibits IL-33 signaling. The protein is Interleukin-1 receptor-like 1 (IL1RL1) of Homo sapiens (Human).